The following is a 244-amino-acid chain: MSSQDVLIHSDDPCHPANLICTLCKQFFHNNWCTGTGGGISIKDPNTNYYYLAPSGVQKEKMIPEDLFVMDAQTLEYLRSPKLYKPSACTPLFLACYQKKNAGAIIHTHSQNAVICSLLFGDEFRIANIEQIKAIPSGKVDPVTKKPMALSFFDTLKIPIIENMAHEDELIDDLHKTFKDYPDTCAVIVRRHGIFVWGPTIDKAKIFNEAIDYLMELAIKMYQMGIPPDCGIGEEKKHLKMASP.

Cys89 provides a ligand contact to substrate. 2 residues coordinate Zn(2+): His107 and His109. Glu130 acts as the Proton donor/acceptor in catalysis. Position 192 (His192) interacts with Zn(2+).

It belongs to the aldolase class II family. MtnB subfamily. Requires Zn(2+) as cofactor.

Its subcellular location is the cytoplasm. It catalyses the reaction 5-(methylsulfanyl)-D-ribulose 1-phosphate = 5-methylsulfanyl-2,3-dioxopentyl phosphate + H2O. It functions in the pathway amino-acid biosynthesis; L-methionine biosynthesis via salvage pathway; L-methionine from S-methyl-5-thio-alpha-D-ribose 1-phosphate: step 2/6. Functionally, catalyzes the dehydration of methylthioribulose-1-phosphate (MTRu-1-P) into 2,3-diketo-5-methylthiopentyl-1-phosphate (DK-MTP-1-P). The polypeptide is Methylthioribulose-1-phosphate dehydratase (Saccharomyces cerevisiae (strain ATCC 204508 / S288c) (Baker's yeast)).